The chain runs to 323 residues: Olfactory receptor 52B2 (323 aa).

Residues 1–27 (MSHTNVTIFHPAVFVLPGIPGLEAYHI) are Extracellular-facing. N-linked (GlcNAc...) asparagine glycosylation is present at asparagine 5. A helical membrane pass occupies residues 28-48 (WLSIPLCLIYITAVLGNSILI). The Cytoplasmic portion of the chain corresponds to 49-56 (VVIVMERN). The helical transmembrane segment at 57–77 (LHVPMYFFLSMLAVMDILLST) threads the bilayer. Topologically, residues 78–101 (TTVPKALAIFWLQAHNIAFDACVT) are extracellular. A disulfide bond links cysteine 99 and cysteine 191. Residues 102 to 122 (QGFFVHMMFVGESAILLAMAF) form a helical membrane-spanning segment. Over 123-141 (DRFVAICAPLRYTTVLTWP) the chain is Cytoplasmic. The helical transmembrane segment at 142–162 (VVGRIALAVITRSFCIIFPVI) threads the bilayer. Residues 163–198 (FLLKRLPFCLTNIVPHSYCEHIGVARLACADITVNI) lie on the Extracellular side of the membrane. A helical transmembrane segment spans residues 199-219 (WYGFSVPIVMVILDVILIAVS). Residues 220 to 239 (YSLILRAVFRLPSQDARHKA) lie on the Cytoplasmic side of the membrane. A helical membrane pass occupies residues 240 to 260 (LSTCGSHLCVILMFYVPSFFT). The Extracellular portion of the chain corresponds to 261 to 275 (LLTHHFGRNIPQHVH). Residues 276–296 (ILLANLYVAVPPMLNPIVYGV) traverse the membrane as a helical segment. Over 297-323 (KTKQIREGVAHRFFDIKTWCCTSPLGS) the chain is Cytoplasmic.

This sequence belongs to the G-protein coupled receptor 1 family.

The protein resides in the cell membrane. Functionally, odorant receptor. This is Olfactory receptor 52B2 (OR52B2) from Homo sapiens (Human).